Here is a 278-residue protein sequence, read N- to C-terminus: Pantothenate synthetase (278 aa).

Position 27–34 (27–34 (MGYLHEGH)) interacts with ATP. Catalysis depends on histidine 34, which acts as the Proton donor. Glutamine 58 provides a ligand contact to (R)-pantoate. Glutamine 58 contributes to the beta-alanine binding site. 144–147 (GQKD) contacts ATP. A (R)-pantoate-binding site is contributed by glutamine 150. Residues valine 173 and 181-184 (MSSR) each bind ATP.

The protein belongs to the pantothenate synthetase family. As to quaternary structure, homodimer.

The protein localises to the cytoplasm. The enzyme catalyses (R)-pantoate + beta-alanine + ATP = (R)-pantothenate + AMP + diphosphate + H(+). It functions in the pathway cofactor biosynthesis; (R)-pantothenate biosynthesis; (R)-pantothenate from (R)-pantoate and beta-alanine: step 1/1. Catalyzes the condensation of pantoate with beta-alanine in an ATP-dependent reaction via a pantoyl-adenylate intermediate. In Roseiflexus sp. (strain RS-1), this protein is Pantothenate synthetase.